We begin with the raw amino-acid sequence, 727 residues long: MAEAEGESLESWLNKATNPSNRQEDWEYIIGFCDQINKELEGPQIAVRLLAHKIQSPQEWEAVQALTVLEACMKNCGRRLHNEVGKFRFLNELIKVVSPKYLGDRVSEKVKAKVIELLFSWTLALPEEAKIKDAYHMLKRQGIVQSDPPIPMDRTLIPSPPPRPKNPVFDDEEKSKLLAKLLRSKNPDDLQEANQLIKSMVKEDEARIQKVTKRLHTLEEVNNNVKLLHEMLLHYSQEFSSEADKELMKELFDRCENKRRTLFKLASETEDNDNSLGDILQASDNLSRVINSYKTIIEGQIINGEVTTSTVPDSEGNSHCGNQGALIDLAELDTPSSSSPVLAPAPAPPTSGIPILPPPPQTSGPPRSRSSSQAEAPSGPDSTNNALSLLDEELLCLGLSDPAPTAPKESAGNSPWHLFQNEPSSDLDFFSPRLVSAASCPSEGSLLPPPVSTSSLSQAPLPAAFPAPVVPASAVTHSTGSFTFSSGPAPALVPKAEPEGPEYPSSSISHRLDALDQLLEEAKVTSGLVKPVSCFSPGPTASPLLPASTPARPLLPFSTGPGSPLFQSPAFQSQGSPQKGPELSLASVHVPLESIKPSSALPVTAYDKNGFRILFHFAKECPPGRPDVLVVVVSMLNTAPLPVKSIVLQAAVPKSMKVKLQPPSGTELSPFSPIQPPAAITQVMLLANPMKEKVRLRYKLTFALGEQLSTELGEVDQFPPVEQWGNL.

In terms of domain architecture, VHS spans 16–146 (ATNPSNRQED…MLKRQGIVQS (131 aa)). Residues Ser159 and Ser275 each carry the phosphoserine modification. Residues 171-298 (DEEKSKLLAK…VINSYKTIIE (128 aa)) form the GAT domain. The interval 299 to 597 (GQIINGEVTT…VHVPLESIKP (299 aa)) is unstructured hinge. The interval 334–385 (TPSSSSPVLAPAPAPPTSGIPILPPPPQTSGPPRSRSSSQAEAPSGPDSTNN) is disordered. Pro residues predominate over residues 343–363 (APAPAPPTSGIPILPPPPQTS). Residues 364–374 (GPPRSRSSSQA) show a composition bias toward low complexity. Residues 391 to 395 (DEELL) carry the DXXLL motif. The tract at residues 400 to 419 (SDPAPTAPKESAGNSPWHLF) is disordered. The GAE domain maps to 598–719 (SSALPVTAYD…TELGEVDQFP (122 aa)).

Belongs to the GGA protein family. As to quaternary structure, monomer. Interacts with GGA1 and GGA2. Binds to clathrin and activated ARFs, such as ARF1, ARF5 and ARF6. Binds RABEP1 and RABGEF1. Interacts with the membrane proteins M6PR/CD-MPR and IGF2R/CI-MPR and the accessory proteins SYNRG, EPN4, NECAP1, NECAP2 and AFTPH/aftiphilin. Interacts with TSG101 and UBC. Interacts with ADRA2B. Interacts with NTRK1; the interaction is independent of NTRK1 activation and ubiquitination. Interacts (via VHS domain) with BACE1 (via DXXLL motif). In terms of processing, phosphorylated by CK2 and dephosphorylated by PP2A. Phosphorylation of GGA3 allows the internal DXXLL motif to bind the VHS domain and to inhibit the recognition of cargo signals. Ubiquitinated. Post-translationally, proteolytically cleaved during apoptosis by CASP3.

The protein localises to the golgi apparatus. The protein resides in the trans-Golgi network membrane. It localises to the endosome membrane. It is found in the early endosome membrane. Its subcellular location is the recycling endosome membrane. Its function is as follows. Plays a role in protein sorting and trafficking between the trans-Golgi network (TGN) and endosomes. Mediates the ARF-dependent recruitment of clathrin to the TGN and binds ubiquitinated proteins and membrane cargo molecules with a cytosolic acidic cluster-dileucine (DXXLL) motif. Mediates export of the GPCR receptor ADRA2B to the cell surface. Involved in BACE1 transport and sorting as well as regulation of BACE1 protein levels. Regulates retrograde transport of BACE1 from endosomes to the trans-Golgi network via interaction through the VHS motif and dependent of BACE1 phosphorylation. Modulates BACE1 protein levels independently of the interaction between VHS domain and DXXLL motif through recognition of ubiquitination. Key player in a novel DXXLL-mediated endosomal sorting machinery to the recycling pathway that targets NTRK1 to the plasma membrane. This Rattus norvegicus (Rat) protein is ADP-ribosylation factor-binding protein GGA3.